The following is a 477-amino-acid chain: Bifunctional protein HldE (477 aa).

The tract at residues 1 to 319 (MTPPLPGFRD…AALGGGPAPA (319 aa)) is ribokinase. 195–198 (NLAE) serves as a coordination point for ATP. The active site involves Asp-264. The segment at 346–477 (MTNGCFDLLH…DLIARIRSRG (132 aa)) is cytidylyltransferase.

It in the N-terminal section; belongs to the carbohydrate kinase PfkB family. The protein in the C-terminal section; belongs to the cytidylyltransferase family. Homodimer.

It carries out the reaction D-glycero-beta-D-manno-heptose 7-phosphate + ATP = D-glycero-beta-D-manno-heptose 1,7-bisphosphate + ADP + H(+). The catalysed reaction is D-glycero-beta-D-manno-heptose 1-phosphate + ATP + H(+) = ADP-D-glycero-beta-D-manno-heptose + diphosphate. Its pathway is nucleotide-sugar biosynthesis; ADP-L-glycero-beta-D-manno-heptose biosynthesis; ADP-L-glycero-beta-D-manno-heptose from D-glycero-beta-D-manno-heptose 7-phosphate: step 1/4. It participates in nucleotide-sugar biosynthesis; ADP-L-glycero-beta-D-manno-heptose biosynthesis; ADP-L-glycero-beta-D-manno-heptose from D-glycero-beta-D-manno-heptose 7-phosphate: step 3/4. Catalyzes the phosphorylation of D-glycero-D-manno-heptose 7-phosphate at the C-1 position to selectively form D-glycero-beta-D-manno-heptose-1,7-bisphosphate. Functionally, catalyzes the ADP transfer from ATP to D-glycero-beta-D-manno-heptose 1-phosphate, yielding ADP-D-glycero-beta-D-manno-heptose. This is Bifunctional protein HldE from Halorhodospira halophila (strain DSM 244 / SL1) (Ectothiorhodospira halophila (strain DSM 244 / SL1)).